Reading from the N-terminus, the 230-residue chain is Cytochrome c oxidase subunit 2 (230 aa).

Residues Met-1–Ser-14 lie on the Mitochondrial intermembrane side of the membrane. A helical transmembrane segment spans residues Pro-15–Met-45. The Mitochondrial matrix portion of the chain corresponds to Val-46–Gln-59. A helical transmembrane segment spans residues Glu-60–Met-87. Topologically, residues Asp-88–Ala-230 are mitochondrial intermembrane. Cu cation-binding residues include His-161, Cys-196, Glu-198, Cys-200, His-204, and Met-207. Glu-198 is a binding site for Mg(2+).

Belongs to the cytochrome c oxidase subunit 2 family. Component of the cytochrome c oxidase (complex IV, CIV), a multisubunit enzyme composed of 14 subunits. The complex is composed of a catalytic core of 3 subunits MT-CO1, MT-CO2 and MT-CO3, encoded in the mitochondrial DNA, and 11 supernumerary subunits COX4I, COX5A, COX5B, COX6A, COX6B, COX6C, COX7A, COX7B, COX7C, COX8 and NDUFA4, which are encoded in the nuclear genome. The complex exists as a monomer or a dimer and forms supercomplexes (SCs) in the inner mitochondrial membrane with NADH-ubiquinone oxidoreductase (complex I, CI) and ubiquinol-cytochrome c oxidoreductase (cytochrome b-c1 complex, complex III, CIII), resulting in different assemblies (supercomplex SCI(1)III(2)IV(1) and megacomplex MCI(2)III(2)IV(2)). Found in a complex with TMEM177, COA6, COX18, COX20, SCO1 and SCO2. Interacts with TMEM177 in a COX20-dependent manner. Interacts with COX20. Interacts with COX16. Cu cation serves as cofactor.

It is found in the mitochondrion inner membrane. The enzyme catalyses 4 Fe(II)-[cytochrome c] + O2 + 8 H(+)(in) = 4 Fe(III)-[cytochrome c] + 2 H2O + 4 H(+)(out). In terms of biological role, component of the cytochrome c oxidase, the last enzyme in the mitochondrial electron transport chain which drives oxidative phosphorylation. The respiratory chain contains 3 multisubunit complexes succinate dehydrogenase (complex II, CII), ubiquinol-cytochrome c oxidoreductase (cytochrome b-c1 complex, complex III, CIII) and cytochrome c oxidase (complex IV, CIV), that cooperate to transfer electrons derived from NADH and succinate to molecular oxygen, creating an electrochemical gradient over the inner membrane that drives transmembrane transport and the ATP synthase. Cytochrome c oxidase is the component of the respiratory chain that catalyzes the reduction of oxygen to water. Electrons originating from reduced cytochrome c in the intermembrane space (IMS) are transferred via the dinuclear copper A center (CU(A)) of subunit 2 and heme A of subunit 1 to the active site in subunit 1, a binuclear center (BNC) formed by heme A3 and copper B (CU(B)). The BNC reduces molecular oxygen to 2 water molecules using 4 electrons from cytochrome c in the IMS and 4 protons from the mitochondrial matrix. The sequence is that of Cytochrome c oxidase subunit 2 (mt-co2) from Salmo salar (Atlantic salmon).